The primary structure comprises 97 residues: uncharacterized protein (97 aa).

A signal peptide spans 1-21; that stretch reads MLLHGLGRMNIIFICFPSLAC.

This is an uncharacterized protein from Schizosaccharomyces pombe (strain 972 / ATCC 24843) (Fission yeast).